Reading from the N-terminus, the 124-residue chain is Fluoride-specific ion channel FluC (124 aa).

4 consecutive transmembrane segments (helical) span residues 4–24 (LLLV…ISIF), 35–55 (FGTL…YALG), 60–80 (ISPE…TTFS), and 102–122 (VVLN…LVFS). Residues G74 and T77 each coordinate Na(+).

Belongs to the fluoride channel Fluc/FEX (TC 1.A.43) family.

It localises to the cell inner membrane. The enzyme catalyses fluoride(in) = fluoride(out). Its activity is regulated as follows. Na(+) is not transported, but it plays an essential structural role and its presence is essential for fluoride channel function. Fluoride-specific ion channel. Important for reducing fluoride concentration in the cell, thus reducing its toxicity. In Shewanella baltica (strain OS185), this protein is Fluoride-specific ion channel FluC.